A 657-amino-acid chain; its full sequence is UvrABC system protein B (657 aa).

A Helicase ATP-binding domain is found at 25 to 182 (KSIKQGNEFQ…KKLIEIQYER (158 aa)). 38–45 (GVTGSGKT) provides a ligand contact to ATP. A Beta-hairpin motif is present at residues 91 to 114 (YYDYYQPEAYVPQTDTFIEKDASI). The region spanning 429–595 (QIDDLYTEIQ…TINKEVRELI (167 aa)) is the Helicase C-terminal domain. Positions 621 to 656 (KKLIKEYTDEMKLAAKNLQFERAAQLRDKIEELKGK) constitute a UVR domain.

This sequence belongs to the UvrB family. As to quaternary structure, forms a heterotetramer with UvrA during the search for lesions. Interacts with UvrC in an incision complex.

The protein localises to the cytoplasm. Its function is as follows. The UvrABC repair system catalyzes the recognition and processing of DNA lesions. A damage recognition complex composed of 2 UvrA and 2 UvrB subunits scans DNA for abnormalities. Upon binding of the UvrA(2)B(2) complex to a putative damaged site, the DNA wraps around one UvrB monomer. DNA wrap is dependent on ATP binding by UvrB and probably causes local melting of the DNA helix, facilitating insertion of UvrB beta-hairpin between the DNA strands. Then UvrB probes one DNA strand for the presence of a lesion. If a lesion is found the UvrA subunits dissociate and the UvrB-DNA preincision complex is formed. This complex is subsequently bound by UvrC and the second UvrB is released. If no lesion is found, the DNA wraps around the other UvrB subunit that will check the other stand for damage. In Clostridium botulinum (strain Eklund 17B / Type B), this protein is UvrABC system protein B.